The primary structure comprises 527 residues: Laccase-5 (527 aa).

The first 23 residues, 1-23 (MGKFHSFVNVVALSLSLSGRVFG), serve as a signal peptide directing secretion. Residues 25 to 150 (IGPVTDLTIS…DGLRGPLVVY (126 aa)) form the Plastocyanin-like 1 domain. N-linked (GlcNAc...) asparagine glycosylation is found at asparagine 74 and asparagine 77. Cu cation-binding residues include histidine 87, histidine 89, histidine 132, and histidine 134. 2 disulfides stabilise this stretch: cysteine 108/cysteine 516 and cysteine 140/cysteine 230. 10 N-linked (GlcNAc...) asparagine glycosylation sites follow: asparagine 156, asparagine 209, asparagine 233, asparagine 242, asparagine 276, asparagine 317, asparagine 358, asparagine 366, asparagine 393, and asparagine 402. The Plastocyanin-like 2 domain occupies 162 to 306 (VDDDTTVITL…GGVNSAILRY (145 aa)). Residues 373–498 (TVPVLLQILS…AGFAIVFAED (126 aa)) enclose the Plastocyanin-like 3 domain. 7 residues coordinate Cu cation: histidine 425, histidine 428, histidine 430, histidine 480, cysteine 481, histidine 482, and histidine 486.

The protein belongs to the multicopper oxidase family. Requires Cu cation as cofactor.

The protein resides in the secreted. It catalyses the reaction 4 hydroquinone + O2 = 4 benzosemiquinone + 2 H2O. Its function is as follows. Lignin degradation and detoxification of lignin-derived products. The chain is Laccase-5 (LCC5) from Trametes versicolor (White-rot fungus).